The following is a 526-amino-acid chain: Probable feruloyl esterase B-2 (526 aa).

Residues 1-18 form the signal peptide; it reads MTKLSLLPLLTLASAVLA. Disulfide bonds link Cys-27–Cys-74 and Cys-62–Cys-113. N-linked (GlcNAc...) asparagine glycosylation is present at Asn-52. Residue Asn-137 is glycosylated (N-linked (GlcNAc...) asparagine). 4 cysteine pairs are disulfide-bonded: Cys-186–Cys-441, Cys-255–Cys-272, Cys-281–Cys-291, and Cys-503–Cys-525. Ser-187 (acyl-ester intermediate) is an active-site residue. The N-linked (GlcNAc...) asparagine glycan is linked to Asn-233. Residues Asp-256, Asp-259, Ala-261, Asp-263, and Ile-265 each contribute to the Ca(2+) site. N-linked (GlcNAc...) asparagine glycosylation is present at Asn-311. Residues Asp-400 and His-440 each act as charge relay system in the active site. The N-linked (GlcNAc...) asparagine glycan is linked to Asn-516.

It belongs to the tannase family.

Its subcellular location is the secreted. It carries out the reaction feruloyl-polysaccharide + H2O = ferulate + polysaccharide.. Its function is as follows. Involved in degradation of plant cell walls. Hydrolyzes the feruloyl-arabinose ester bond in arabinoxylans as well as the feruloyl-galactose and feruloyl-arabinose ester bonds in pectin. The polypeptide is Probable feruloyl esterase B-2 (faeB-2) (Aspergillus fumigatus (strain CBS 144.89 / FGSC A1163 / CEA10) (Neosartorya fumigata)).